A 261-amino-acid chain; its full sequence is 6-phosphogluconolactonase (261 aa).

This sequence belongs to the glucosamine/galactosamine-6-phosphate isomerase family. 6-phosphogluconolactonase subfamily.

The catalysed reaction is 6-phospho-D-glucono-1,5-lactone + H2O = 6-phospho-D-gluconate + H(+). It functions in the pathway carbohydrate degradation; pentose phosphate pathway; D-ribulose 5-phosphate from D-glucose 6-phosphate (oxidative stage): step 2/3. Functionally, hydrolysis of 6-phosphogluconolactone to 6-phosphogluconate. The sequence is that of 6-phosphogluconolactonase (pgl) from Streptomyces coelicolor (strain ATCC BAA-471 / A3(2) / M145).